Reading from the N-terminus, the 248-residue chain is Adenosylcobinamide-GDP ribazoletransferase (248 aa).

Helical transmembrane passes span 24-44, 70-90, 106-126, 134-154, 168-188, 189-209, and 228-248; these read EINL…IGAW, IIIT…GLFS, VGAN…SLFL, IGWL…LLFA, IFLG…LVAL, GAFF…FTII, and AGGQ…WGLI.

Belongs to the CobS family. Requires Mg(2+) as cofactor.

The protein localises to the cell membrane. The catalysed reaction is alpha-ribazole + adenosylcob(III)inamide-GDP = adenosylcob(III)alamin + GMP + H(+). It catalyses the reaction alpha-ribazole 5'-phosphate + adenosylcob(III)inamide-GDP = adenosylcob(III)alamin 5'-phosphate + GMP + H(+). It functions in the pathway cofactor biosynthesis; adenosylcobalamin biosynthesis; adenosylcobalamin from cob(II)yrinate a,c-diamide: step 7/7. Its function is as follows. Joins adenosylcobinamide-GDP and alpha-ribazole to generate adenosylcobalamin (Ado-cobalamin). Also synthesizes adenosylcobalamin 5'-phosphate from adenosylcobinamide-GDP and alpha-ribazole 5'-phosphate. The chain is Adenosylcobinamide-GDP ribazoletransferase from Listeria monocytogenes serotype 4b (strain F2365).